A 134-amino-acid polypeptide reads, in one-letter code: Aspartate 1-decarboxylase (134 aa).

Catalysis depends on S25, which acts as the Schiff-base intermediate with substrate; via pyruvic acid. S25 carries the pyruvic acid (Ser) modification. A substrate-binding site is contributed by T57. Y58 serves as the catalytic Proton donor. 73 to 75 is a binding site for substrate; the sequence is GAA.

This sequence belongs to the PanD family. Heterooctamer of four alpha and four beta subunits. Pyruvate is required as a cofactor. Is synthesized initially as an inactive proenzyme, which is activated by self-cleavage at a specific serine bond to produce a beta-subunit with a hydroxyl group at its C-terminus and an alpha-subunit with a pyruvoyl group at its N-terminus.

It localises to the cytoplasm. The enzyme catalyses L-aspartate + H(+) = beta-alanine + CO2. It participates in cofactor biosynthesis; (R)-pantothenate biosynthesis; beta-alanine from L-aspartate: step 1/1. Catalyzes the pyruvoyl-dependent decarboxylation of aspartate to produce beta-alanine. The chain is Aspartate 1-decarboxylase from Sulfurihydrogenibium sp. (strain YO3AOP1).